Here is a 405-residue protein sequence, read N- to C-terminus: Polyadenylate-binding protein RBP45B (405 aa).

Residues M1–S19 show a composition bias toward pro residues. The segment at M1–Q54 is disordered. Positions A20–A35 are enriched in low complexity. RRM domains are found at residues R62–L143, Y155–S234, and T261–S333. The tract at residues G379–Y405 is disordered. Over residues G380 to Y405 the composition is skewed to low complexity.

The protein belongs to the polyadenylate-binding RBP45 family. In terms of assembly, both isoform 1 and isoform 2 interact with poly(A)+ RNA in nucleus. As to expression, expressed in roots, leaves, stems, flowers, siliques, and seedlings. Present in immature anther tissues (tapetum cells) and mature pollen grains.

It is found in the nucleus. Its function is as follows. Heterogeneous nuclear ribonucleoprotein (hnRNP)-protein binding the poly(A) tail of mRNA and probably involved in some steps of pre-mRNA maturation. The protein is Polyadenylate-binding protein RBP45B (RBP45B) of Arabidopsis thaliana (Mouse-ear cress).